A 272-amino-acid polypeptide reads, in one-letter code: Probable nitrilase C965.09 (272 aa).

One can recognise a CN hydrolase domain in the interval 3–244 (ANIACVQMAP…EGVISYTVDL (242 aa)). The Proton acceptor role is filled by Glu45. Lys118 serves as the catalytic Proton donor. Cys150 functions as the Nucleophile in the catalytic mechanism.

Belongs to the carbon-nitrogen hydrolase superfamily.

It localises to the cytoplasm. It is found in the nucleus. In Schizosaccharomyces pombe (strain 972 / ATCC 24843) (Fission yeast), this protein is Probable nitrilase C965.09.